Reading from the N-terminus, the 261-residue chain is Ribonuclease HII (261 aa).

Residues Lys71–Ser259 enclose the RNase H type-2 domain. A divalent metal cation is bound by residues Asp77, Glu78, and Asp169.

Belongs to the RNase HII family. The cofactor is Mn(2+). It depends on Mg(2+) as a cofactor.

Its subcellular location is the cytoplasm. It carries out the reaction Endonucleolytic cleavage to 5'-phosphomonoester.. Its function is as follows. Endonuclease that specifically degrades the RNA of RNA-DNA hybrids. The sequence is that of Ribonuclease HII from Listeria monocytogenes serotype 4b (strain F2365).